Here is a 277-residue protein sequence, read N- to C-terminus: Tryptophan synthase alpha chain (277 aa).

Catalysis depends on proton acceptor residues glutamate 43 and glutamate 54.

The protein belongs to the TrpA family. In terms of assembly, tetramer of two alpha and two beta chains.

It catalyses the reaction (1S,2R)-1-C-(indol-3-yl)glycerol 3-phosphate + L-serine = D-glyceraldehyde 3-phosphate + L-tryptophan + H2O. It participates in amino-acid biosynthesis; L-tryptophan biosynthesis; L-tryptophan from chorismate: step 5/5. In terms of biological role, the alpha subunit is responsible for the aldol cleavage of indoleglycerol phosphate to indole and glyceraldehyde 3-phosphate. This chain is Tryptophan synthase alpha chain, found in Haloferax volcanii (strain ATCC 29605 / DSM 3757 / JCM 8879 / NBRC 14742 / NCIMB 2012 / VKM B-1768 / DS2) (Halobacterium volcanii).